Here is a 213-residue protein sequence, read N- to C-terminus: 3-demethoxyubiquinol 3-hydroxylase (213 aa).

Residues Glu62, Glu92, His95, Glu144, Glu176, and His179 each contribute to the Fe cation site.

The protein belongs to the COQ7 family. The cofactor is Fe cation.

Its subcellular location is the cell membrane. It catalyses the reaction a 5-methoxy-2-methyl-3-(all-trans-polyprenyl)benzene-1,4-diol + AH2 + O2 = a 3-demethylubiquinol + A + H2O. Its pathway is cofactor biosynthesis; ubiquinone biosynthesis. Functionally, catalyzes the hydroxylation of 2-nonaprenyl-3-methyl-6-methoxy-1,4-benzoquinol during ubiquinone biosynthesis. The sequence is that of 3-demethoxyubiquinol 3-hydroxylase from Chromohalobacter salexigens (strain ATCC BAA-138 / DSM 3043 / CIP 106854 / NCIMB 13768 / 1H11).